The chain runs to 398 residues: Acetate kinase (398 aa).

Asn7 lines the Mg(2+) pocket. Lys14 contributes to the ATP binding site. Arg92 is a binding site for substrate. The active-site Proton donor/acceptor is Asp149. ATP-binding positions include 208–212 (HLGNG), 283–285 (DCR), and 331–335 (GIGEN). A Mg(2+)-binding site is contributed by Glu385.

Belongs to the acetokinase family. Homodimer. Requires Mg(2+) as cofactor. It depends on Mn(2+) as a cofactor.

Its subcellular location is the cytoplasm. The enzyme catalyses acetate + ATP = acetyl phosphate + ADP. It participates in metabolic intermediate biosynthesis; acetyl-CoA biosynthesis; acetyl-CoA from acetate: step 1/2. Functionally, catalyzes the formation of acetyl phosphate from acetate and ATP. Can also catalyze the reverse reaction. The polypeptide is Acetate kinase (Fusobacterium nucleatum subsp. nucleatum (strain ATCC 25586 / DSM 15643 / BCRC 10681 / CIP 101130 / JCM 8532 / KCTC 2640 / LMG 13131 / VPI 4355)).